We begin with the raw amino-acid sequence, 79 residues long: UPF0154 protein Lm4b_01315 (79 aa).

A helical transmembrane segment spans residues 2 to 22 (WIYILVGIICLLAGLAGGFFI). Over residues 57–66 (KINQMMSAMN) the composition is skewed to polar residues. The segment at 57-79 (KINQMMSAMNKQQEKEKPKKTKK) is disordered.

It belongs to the UPF0154 family.

The protein resides in the cell membrane. The chain is UPF0154 protein Lm4b_01315 from Listeria monocytogenes serotype 4b (strain CLIP80459).